A 249-amino-acid chain; its full sequence is AA9 family lytic polysaccharide monooxygenase A (249 aa).

The first 21 residues, 1 to 21 (MALSKIAALSTILASASLVAG), serve as a signal peptide directing secretion. His22 is a Cu(2+) binding site. Position 22 is a methylhistidine (His22). 2 N-linked (GlcNAc...) asparagine glycosylation sites follow: Asn34 and Asn80. 2 disulfide bridges follow: Cys77/Cys199 and Cys118/Cys122. Residue His107 participates in Cu(2+) binding. O2-binding residues include His185 and Gln194. Tyr196 lines the Cu(2+) pocket.

This sequence belongs to the polysaccharide monooxygenase AA9 family. It depends on Cu(2+) as a cofactor. The catalytically essential N-terminal histidine His-22 is post-translationally modified by methylation to prevent protonation of the histidine side chain, and protect the critical active site of the enzyme from oxidative damage.

Its subcellular location is the secreted. The enzyme catalyses [(1-&gt;4)-beta-D-glucosyl]n+m + reduced acceptor + O2 = 4-dehydro-beta-D-glucosyl-[(1-&gt;4)-beta-D-glucosyl]n-1 + [(1-&gt;4)-beta-D-glucosyl]m + acceptor + H2O.. Lytic polysaccharide monooxygenase (LPMO) that exhibits a mixed C1/C4 oxidative cleavage activity on cellulose and xyloglucan. Catalysis by LPMOs requires the reduction of the active-site copper from Cu(II) to Cu(I) by a reducing agent and H(2)O(2) or O(2) as a cosubstrate. Shows a higher boosting effect with cellulases on the enzymatic saccharification of complex lignocellulosic substrates associated with xyloglucan than on the lignocellulosic substrates without xyloglucan. The oxidative cleavage of xyloglucan by LPMO9A may facilitate to open up the sterical hindrance of cellulose by xyloglucan and thereby increase accessibility for cellulase to lignocellulosic substrates. The polypeptide is AA9 family lytic polysaccharide monooxygenase A (Penicillium parvum (Eupenicillium parvum)).